Consider the following 181-residue polypeptide: Adenylate kinase (181 aa).

Residue 10-15 (GAGKGT) participates in ATP binding. The segment at 30 to 59 (STGDLFRSNISEGTELGLQAKQYLDAGDLV) is NMP. AMP-binding positions include T31, R36, 57-59 (DLV), 85-88 (GFPR), and Q92. The interval 126–132 (GRGRADD) is LID. R127 is an ATP binding site. AMP contacts are provided by R129 and R140. G166 lines the ATP pocket.

Belongs to the adenylate kinase family. In terms of assembly, monomer.

The protein resides in the cytoplasm. It catalyses the reaction AMP + ATP = 2 ADP. It functions in the pathway purine metabolism; AMP biosynthesis via salvage pathway; AMP from ADP: step 1/1. In terms of biological role, catalyzes the reversible transfer of the terminal phosphate group between ATP and AMP. Plays an important role in cellular energy homeostasis and in adenine nucleotide metabolism. The sequence is that of Adenylate kinase from Mycobacteroides abscessus (strain ATCC 19977 / DSM 44196 / CCUG 20993 / CIP 104536 / JCM 13569 / NCTC 13031 / TMC 1543 / L948) (Mycobacterium abscessus).